We begin with the raw amino-acid sequence, 450 residues long: tRNA modification GTPase MnmE (450 aa).

(6S)-5-formyl-5,6,7,8-tetrahydrofolate-binding residues include Arg-25, Glu-83, and Lys-122. A TrmE-type G domain is found at 218 to 377 (GFKVAIIGKP…QMEALLDSIG (160 aa)). Asn-228 is a binding site for K(+). Residues 228–233 (NVGKSS), 247–253 (SDIAGTT), and 272–275 (DTAG) each bind GTP. Mg(2+) is bound at residue Ser-232. 3 residues coordinate K(+): Ser-247, Ile-249, and Thr-252. Thr-253 contacts Mg(2+). Position 450 (Lys-450) interacts with (6S)-5-formyl-5,6,7,8-tetrahydrofolate.

This sequence belongs to the TRAFAC class TrmE-Era-EngA-EngB-Septin-like GTPase superfamily. TrmE GTPase family. As to quaternary structure, homodimer. Heterotetramer of two MnmE and two MnmG subunits. It depends on K(+) as a cofactor.

The protein localises to the cytoplasm. Functionally, exhibits a very high intrinsic GTPase hydrolysis rate. Involved in the addition of a carboxymethylaminomethyl (cmnm) group at the wobble position (U34) of certain tRNAs, forming tRNA-cmnm(5)s(2)U34. The chain is tRNA modification GTPase MnmE from Sulfurovum sp. (strain NBC37-1).